Reading from the N-terminus, the 349-residue chain is Microfibril-associated glycoprotein 3 (349 aa).

An N-terminal signal peptide occupies residues 1–21; sequence MKLHHCLSFLLVVTLVPAALS. Residues 22-139 are Extracellular-facing; that stretch reads LEDVAPLGAN…TLRVIFTSGD (118 aa). N-linked (GlcNAc...) asparagine glycans are attached at residues Asn31, Asn36, Asn63, and Asn103. Residues 41–130 enclose the Ig-like C2-type domain; that stretch reads PSFELSAGSY…SPARASYSVT (90 aa). The cysteines at positions 68 and 117 are disulfide-linked. A helical membrane pass occupies residues 140-160; the sequence is MSVYYMVVCLIAFTITLILNV. The Cytoplasmic portion of the chain corresponds to 161 to 349; that stretch reads TRLCLMSTHL…EGSIHHRVSI (189 aa). The tract at residues 280 to 349 is disordered; it reads NPELGRSNSP…EGSIHHRVSI (70 aa). The segment covering 311 to 331 has biased composition (polar residues); that stretch reads VHLQSETKSIGTDSQDSSHFS.

Post-translationally, glycosylated.

It localises to the cell membrane. Its function is as follows. Component of the elastin-associated microfibrils. The polypeptide is Microfibril-associated glycoprotein 3 (Mfap3) (Mus musculus (Mouse)).